The primary structure comprises 542 residues: MARYVFITGGVVSSLGKGIAAAALGALLQARGYRVRLRKLDPYLNVDPGTMSPTQHGEVFVTDDGAETDLDLGHYERFTGRSATKTDNITTGRIYKNIIDKERRGDYLGATVQVIPHVTNEIKNFVTEGNEDYDFVICEIGGTVGDIEAMPFMEAIRQLGNDLPRGTAVYVHLTLMPYIPAAGELKTKPTQHSVKELQALGIHPDILLVRADREIPEAERRKLSLFCNVRQSAVIQALDVASIYDVPIAYHKEGLDNEVLAAFGIEPAPKPRMEAWEDVAHRIRTPEGEVTIAIVGKYTGLKDAYKSLIEALYHGGIANRVKVKLEWIESEVFEKEDPAPYLEKVHGILVPGGFGERGSEGKINAARFARERKVPYFGICFGMQMAVVEAARNLAGIEKASSTEFGPTKEPVVGLMTEWVKGNELEKRSAAGDLGGTMRLGAYRAALKPETKIAGIYGSPDISERHRHRYEVNVDYKDRLESCGLVFSGMSPDGVLPETVEYPDHPWFIGVQYHPELKSRPLDPHPLFASFIEAALEQSRLV.

The tract at residues 1–265 is amidoligase domain; it reads MARYVFITGG…DNEVLAAFGI (265 aa). Residue Ser13 coordinates CTP. Residue Ser13 coordinates UTP. ATP contacts are provided by residues 14-19 and Asp71; that span reads SLGKGI. Mg(2+) contacts are provided by Asp71 and Glu139. Residues 146–148, 186–191, and Lys222 each bind CTP; these read DIE and KTKPTQ. Residues 186–191 and Lys222 contribute to the UTP site; that span reads KTKPTQ. The Glutamine amidotransferase type-1 domain maps to 291 to 541; sequence TIAIVGKYTG…IEAALEQSRL (251 aa). Gly353 is a binding site for L-glutamine. The active-site Nucleophile; for glutamine hydrolysis is Cys380. L-glutamine-binding positions include 381–384, Glu404, and Arg469; that span reads FGMQ. Catalysis depends on residues His514 and Glu516.

The protein belongs to the CTP synthase family. In terms of assembly, homotetramer.

It catalyses the reaction UTP + L-glutamine + ATP + H2O = CTP + L-glutamate + ADP + phosphate + 2 H(+). The enzyme catalyses L-glutamine + H2O = L-glutamate + NH4(+). The catalysed reaction is UTP + NH4(+) + ATP = CTP + ADP + phosphate + 2 H(+). It participates in pyrimidine metabolism; CTP biosynthesis via de novo pathway; CTP from UDP: step 2/2. Its activity is regulated as follows. Allosterically activated by GTP, when glutamine is the substrate; GTP has no effect on the reaction when ammonia is the substrate. The allosteric effector GTP functions by stabilizing the protein conformation that binds the tetrahedral intermediate(s) formed during glutamine hydrolysis. Inhibited by the product CTP, via allosteric rather than competitive inhibition. Its function is as follows. Catalyzes the ATP-dependent amination of UTP to CTP with either L-glutamine or ammonia as the source of nitrogen. Regulates intracellular CTP levels through interactions with the four ribonucleotide triphosphates. The chain is CTP synthase from Sinorhizobium medicae (strain WSM419) (Ensifer medicae).